A 441-amino-acid chain; its full sequence is MSTTTESTHDGAGETLVVAGGQDWDKVVEAARSADPGERIVVNMGPQHPSTHGVLRLILEIEGETVTEARCGIGYLHTGIEKNLEYRYWTQGVTFVTRMDYLSPFFNETAYCLGVEKLLGITDQIPERVNVIRVMMMELNRISSHLVALATGGMELGAMTPMFVGFRGREIVLTLFESITGLRMNSAYIRPGGVAQDLPPNAKTEIAQALDQLRQPLREMGDLLNENAIWKARTQDIGYLDLTGCMALGITGPILRATGLPHDLRKSEPYCGYENYEFDVITADTCDAYGRYMIRVKEMWESIKIVEQCLDKLQPGPIMVENGKIAWPADLKVGPDGLGNSPEHIAKIMGGSMEALIHHFKLVTEGIRVPPGQVYTAVESPRGELGVHMVSDGGTRPYRVHYRDPSFTNLQSVAAMCEGGMVADLITAVASIDPVMGGVDR.

The protein belongs to the complex I 49 kDa subunit family. In terms of assembly, NDH-1 is composed of 14 different subunits. Subunits NuoB, C, D, E, F, and G constitute the peripheral sector of the complex.

It localises to the cell membrane. It carries out the reaction a quinone + NADH + 5 H(+)(in) = a quinol + NAD(+) + 4 H(+)(out). NDH-1 shuttles electrons from NADH, via FMN and iron-sulfur (Fe-S) centers, to quinones in the respiratory chain. The immediate electron acceptor for the enzyme in this species is believed to be a menaquinone. Couples the redox reaction to proton translocation (for every two electrons transferred, four hydrogen ions are translocated across the cytoplasmic membrane), and thus conserves the redox energy in a proton gradient. This Mycobacterium avium (strain 104) protein is NADH-quinone oxidoreductase subunit D.